The sequence spans 120 residues: MQRIMLRAKLHRVTVTQADLNYEGSCGIDQDLLDAADMKEFEKIELYNVNNGERFSTYIIKGERGSGEISLNGAAARRAHLGDQLIICTYAPMSDEEIAAYKPKVILVNEKNGIKEIKKF.

Residue Ser25 is the Schiff-base intermediate with substrate; via pyruvic acid of the active site. The residue at position 25 (Ser25) is a Pyruvic acid (Ser). Thr57 contributes to the substrate binding site. Tyr58 functions as the Proton donor in the catalytic mechanism. 73–75 (GAA) lines the substrate pocket.

Belongs to the PanD family. As to quaternary structure, heterooctamer of four alpha and four beta subunits. It depends on pyruvate as a cofactor. Is synthesized initially as an inactive proenzyme, which is activated by self-cleavage at a specific serine bond to produce a beta-subunit with a hydroxyl group at its C-terminus and an alpha-subunit with a pyruvoyl group at its N-terminus.

The protein resides in the cytoplasm. The enzyme catalyses L-aspartate + H(+) = beta-alanine + CO2. The protein operates within cofactor biosynthesis; (R)-pantothenate biosynthesis; beta-alanine from L-aspartate: step 1/1. In terms of biological role, catalyzes the pyruvoyl-dependent decarboxylation of aspartate to produce beta-alanine. This is Aspartate 1-decarboxylase from Cupriavidus necator (strain ATCC 17699 / DSM 428 / KCTC 22496 / NCIMB 10442 / H16 / Stanier 337) (Ralstonia eutropha).